A 183-amino-acid polypeptide reads, in one-letter code: Ribosome maturation factor RimM (183 aa).

Residues 105-181 enclose the PRC barrel domain; sequence ANEYHLMDLI…RIEIDPPLGL (77 aa).

This sequence belongs to the RimM family. In terms of assembly, binds ribosomal protein uS19.

The protein resides in the cytoplasm. An accessory protein needed during the final step in the assembly of 30S ribosomal subunit, possibly for assembly of the head region. Essential for efficient processing of 16S rRNA. May be needed both before and after RbfA during the maturation of 16S rRNA. It has affinity for free ribosomal 30S subunits but not for 70S ribosomes. The polypeptide is Ribosome maturation factor RimM (Thermosynechococcus vestitus (strain NIES-2133 / IAM M-273 / BP-1)).